A 170-amino-acid chain; its full sequence is Peptide deformylase (170 aa).

Cysteine 91 and histidine 133 together coordinate Fe cation. The active site involves glutamate 134. Residue histidine 137 participates in Fe cation binding.

Belongs to the polypeptide deformylase family. The cofactor is Fe(2+).

It carries out the reaction N-terminal N-formyl-L-methionyl-[peptide] + H2O = N-terminal L-methionyl-[peptide] + formate. In terms of biological role, removes the formyl group from the N-terminal Met of newly synthesized proteins. Requires at least a dipeptide for an efficient rate of reaction. N-terminal L-methionine is a prerequisite for activity but the enzyme has broad specificity at other positions. The chain is Peptide deformylase from Glaesserella parasuis serovar 5 (strain SH0165) (Haemophilus parasuis).